The following is a 95-amino-acid chain: Small ribosomal subunit protein bS20c (95 aa).

The protein belongs to the bacterial ribosomal protein bS20 family.

It localises to the plastid. Its subcellular location is the cyanelle. Functionally, binds directly to 16S ribosomal RNA. This is Small ribosomal subunit protein bS20c (rps20) from Cyanophora paradoxa.